The following is a 498-amino-acid chain: ATP synthase subunit beta, chloroplastic (498 aa).

172–179 lines the ATP pocket; sequence GGAGVGKT.

It belongs to the ATPase alpha/beta chains family. F-type ATPases have 2 components, CF(1) - the catalytic core - and CF(0) - the membrane proton channel. CF(1) has five subunits: alpha(3), beta(3), gamma(1), delta(1), epsilon(1). CF(0) has four main subunits: a(1), b(1), b'(1) and c(9-12).

Its subcellular location is the plastid. It localises to the chloroplast thylakoid membrane. It carries out the reaction ATP + H2O + 4 H(+)(in) = ADP + phosphate + 5 H(+)(out). Its function is as follows. Produces ATP from ADP in the presence of a proton gradient across the membrane. The catalytic sites are hosted primarily by the beta subunits. The polypeptide is ATP synthase subunit beta, chloroplastic (Citrus sinensis (Sweet orange)).